The chain runs to 78 residues: Protein SlyX homolog (78 aa).

Belongs to the SlyX family.

This chain is Protein SlyX homolog, found in Xanthomonas campestris pv. campestris (strain 8004).